The chain runs to 639 residues: Kininogen-1 (639 aa).

The signal sequence occupies residues 1 to 18; the sequence is MKLITILLLCSRLLPSLA. The 105-residue stretch at 28–132 folds into the Cystatin kininogen-type 1 domain; sequence CNDESLFQAV…TQICNITPGK (105 aa). Disulfide bonds link C28-C609, C83-C94, C107-C126, C142-C145, C206-C218, C229-C248, C264-C267, C328-C340, and C351-C370. N-linked (GlcNAc...) asparagine glycosylation occurs at N82. One can recognise a Cystatin kininogen-type 2 domain in the interval 151-254; sequence VDSPELGPVL…SDSCEFYPGD (104 aa). Residues N169 and N205 are each glycosylated (N-linked (GlcNAc...) asparagine). A Cystatin kininogen-type 3 domain is found at 273-376; it reads VDSPELKEAL…TVKCKVLDMT (104 aa). An N-linked (GlcNAc...) asparagine glycan is attached at N294. S332 bears the Phosphoserine mark. Disordered regions lie at residues 438–462 and 476–547; these read NHQG…GHGH and GYDH…LNPP. Basic residues predominate over residues 482 to 502; sequence PVGHGHGQRHGHGHGHGHGRD. Basic and acidic residues predominate over residues 503 to 519; sequence KHTNKDKNNVKHTDQRR. The segment covering 522–537 has biased composition (polar residues); the sequence is LTSSSEDNTTSTQIQG. A glycan (N-linked (GlcNAc...) asparagine) is linked at N529.

In terms of processing, bradykinin is released from kininogen by plasma kallikrein. Post-translationally, phosphorylated by FAM20C in the extracellular medium. Bradykinin is inactivated by ACE, which removes the dipeptide Arg-Phe from its C-terminus. In terms of tissue distribution, plasma.

It localises to the secreted. Its subcellular location is the extracellular space. In terms of biological role, kininogens are inhibitors of thiol proteases. HMW-kininogen plays an important role in blood coagulation by helping to position optimally prekallikrein and factor XI next to factor XII; HMW-kininogen inhibits the thrombin- and plasmin-induced aggregation of thrombocytes. LMW-kininogen inhibits the aggregation of thrombocytes. LMW-kininogen is in contrast to HMW-kininogen not involved in blood clotting. Functionally, the active peptide bradykinin is a potent vasodilatator that is released from HMW-kininogen shows a variety of physiological effects: (A) influence in smooth muscle contraction, (B) induction of hypotension, (C) natriuresis and diuresis, (D) decrease in blood glucose level, (E) it is a mediator of inflammation and causes (E1) increase in vascular permeability, (E2) stimulation of nociceptors (4E3) release of other mediators of inflammation (e.g. prostaglandins), (F) it has a cardioprotective effect (directly via bradykinin action, indirectly via endothelium-derived relaxing factor action). The polypeptide is Kininogen-1 (Kng1) (Rattus norvegicus (Rat)).